The primary structure comprises 460 residues: Dihydroorotate dehydrogenase (quinone), mitochondrial (460 aa).

Residues 1–32 constitute a mitochondrion transit peptide; that stretch reads MAGRAATSSAKWAREFLFRRVSSNPLGATRNC. A helical membrane pass occupies residues 53 to 69; that stretch reads ILTGATIGLAIAGGAYV. FMN-binding positions include 141 to 145 and Ser165; that span reads AGFDK. Lys145 provides a ligand contact to substrate. 190–194 provides a ligand contact to substrate; the sequence is NRCGF. Residues 213–245 are disordered; it reads RMLAETSATSSSPSDDVKPGGKSGPGILGVNLG. FMN is bound by residues Asn243 and Asn274. 274-279 serves as a coordination point for substrate; the sequence is NVSSPN. The Nucleophile role is filled by Ser277. FMN is bound by residues Lys319 and Ser347. Substrate is bound at residue 348–349; it reads NT. FMN-binding positions include Gly371, Gly400, and 421 to 422; that span reads YT.

The protein belongs to the dihydroorotate dehydrogenase family. Type 2 subfamily. FMN is required as a cofactor.

Its subcellular location is the mitochondrion inner membrane. The enzyme catalyses (S)-dihydroorotate + a quinone = orotate + a quinol. It participates in pyrimidine metabolism; UMP biosynthesis via de novo pathway; orotate from (S)-dihydroorotate (quinone route): step 1/1. In terms of biological role, catalyzes the conversion of dihydroorotate to orotate with quinone as electron acceptor. This chain is Dihydroorotate dehydrogenase (quinone), mitochondrial (PYRD), found in Arabidopsis thaliana (Mouse-ear cress).